We begin with the raw amino-acid sequence, 290 residues long: Light-independent protochlorophyllide reductase iron-sulfur ATP-binding protein (290 aa).

Residues Gly-10 to Thr-15 and Lys-39 each bind ATP. Position 14 (Ser-14) interacts with Mg(2+). 2 residues coordinate [4Fe-4S] cluster: Cys-95 and Cys-129. Asn-180–Arg-181 serves as a coordination point for ATP.

The protein belongs to the NifH/BchL/ChlL family. As to quaternary structure, homodimer. Protochlorophyllide reductase is composed of three subunits; ChlL, ChlN and ChlB. The cofactor is [4Fe-4S] cluster.

It is found in the plastid. Its subcellular location is the chloroplast. It carries out the reaction chlorophyllide a + oxidized 2[4Fe-4S]-[ferredoxin] + 2 ADP + 2 phosphate = protochlorophyllide a + reduced 2[4Fe-4S]-[ferredoxin] + 2 ATP + 2 H2O. Its pathway is porphyrin-containing compound metabolism; chlorophyll biosynthesis (light-independent). Its function is as follows. Component of the dark-operative protochlorophyllide reductase (DPOR) that uses Mg-ATP and reduced ferredoxin to reduce ring D of protochlorophyllide (Pchlide) to form chlorophyllide a (Chlide). This reaction is light-independent. The L component serves as a unique electron donor to the NB-component of the complex, and binds Mg-ATP. This is Light-independent protochlorophyllide reductase iron-sulfur ATP-binding protein from Cycas taitungensis (Prince sago).